A 90-amino-acid polypeptide reads, in one-letter code: Probable Fe(2+)-trafficking protein (90 aa).

It belongs to the Fe(2+)-trafficking protein family.

Functionally, could be a mediator in iron transactions between iron acquisition and iron-requiring processes, such as synthesis and/or repair of Fe-S clusters in biosynthetic enzymes. This Nitrosomonas eutropha (strain DSM 101675 / C91 / Nm57) protein is Probable Fe(2+)-trafficking protein.